The sequence spans 93 residues: Small ribosomal subunit protein uS19 (93 aa).

This sequence belongs to the universal ribosomal protein uS19 family.

Protein S19 forms a complex with S13 that binds strongly to the 16S ribosomal RNA. The sequence is that of Small ribosomal subunit protein uS19 from Geobacter sulfurreducens (strain ATCC 51573 / DSM 12127 / PCA).